The primary structure comprises 876 residues: Protein argonaute 17 (876 aa).

Residues 246–338 (PVVDYVAQLL…LPLEVCKIAE (93 aa)) form the PAZ domain. Residues 514 to 834 (LLIVILPNNN…LSSRARCYIK (321 aa)) form the Piwi domain. Positions 839-859 (GDSTSHTSLPSEEDSSAASET) are disordered.

This sequence belongs to the argonaute family. Ago subfamily.

Its function is as follows. Probably involved in the RNA silencing pathway. May bind to short RNAs such as microRNAs (miRNAs) or short interfering RNAs (siRNAs), and represses the translation of mRNAs which are complementary to them. The protein is Protein argonaute 17 (AGO17) of Oryza sativa subsp. japonica (Rice).